The chain runs to 324 residues: Calpain-2 catalytic subunit (324 aa).

Positions 1 to 138 (YPNTFWMNPQ…KKADYQVVDD (138 aa)) are domain III. The interval 139–153 (EIEADLEENDASEDD) is linker. Residues 158 to 324 (FRRLFAQLAG…LISWLCFSVL (167 aa)) form a domain IV region. Positions 166, 169, 171, 176, 209, 211, 213, 215, 220, 239, 241, 243, 245, 250, 282, and 285 each coordinate Ca(2+). EF-hand domains lie at 190–224 (DIKS…FYIL) and 226–261 (TKIQ…AGFK).

This sequence belongs to the peptidase C2 family. Forms a heterodimer with a small (regulatory) subunit (CAPNS1). Interacts with CPEB3; this leads to cleavage of CPEB3. Requires Ca(2+) as cofactor. As to expression, ubiquitous.

The protein resides in the cytoplasm. It is found in the cell membrane. The catalysed reaction is Broad endopeptidase specificity.. With respect to regulation, activated by 200-1000 micromolar concentrations of calcium and inhibited by calpastatin. Its function is as follows. Calcium-regulated non-lysosomal thiol-protease which catalyzes limited proteolysis of substrates involved in cytoskeletal remodeling and signal transduction. Proteolytically cleaves MYOC at 'Arg-226'. Proteolytically cleaves CPEB3 following neuronal stimulation which abolishes CPEB3 translational repressor activity, leading to translation of CPEB3 target mRNAs. This chain is Calpain-2 catalytic subunit (CAPN2), found in Sus scrofa (Pig).